Consider the following 193-residue polypeptide: Hypoxanthine/guanine phosphoribosyltransferase (193 aa).

This sequence belongs to the purine/pyrimidine phosphoribosyltransferase family. Archaeal HPRT subfamily. Homodimer.

It localises to the cytoplasm. It catalyses the reaction IMP + diphosphate = hypoxanthine + 5-phospho-alpha-D-ribose 1-diphosphate. The catalysed reaction is GMP + diphosphate = guanine + 5-phospho-alpha-D-ribose 1-diphosphate. It participates in purine metabolism; IMP biosynthesis via salvage pathway; IMP from hypoxanthine: step 1/1. Functionally, catalyzes a salvage reaction resulting in the formation of IMP that is energically less costly than de novo synthesis. The chain is Hypoxanthine/guanine phosphoribosyltransferase from Methanothermobacter thermautotrophicus (strain ATCC 29096 / DSM 1053 / JCM 10044 / NBRC 100330 / Delta H) (Methanobacterium thermoautotrophicum).